The sequence spans 652 residues: DNA ligase (652 aa).

Residues 29–33, 78–79, and Glu-107 contribute to the NAD(+) site; these read DAEYD and SL. Lys-109 functions as the N6-AMP-lysine intermediate in the catalytic mechanism. 4 residues coordinate NAD(+): Arg-130, Glu-164, Lys-278, and Lys-302. Residues Cys-395, Cys-398, Cys-413, and Cys-418 each contribute to the Zn(2+) site. Residues 577-652 form the BRCT domain; it reads DENAALSGMT…IKDEAWLESL (76 aa).

Belongs to the NAD-dependent DNA ligase family. LigA subfamily. It depends on Mg(2+) as a cofactor. Mn(2+) is required as a cofactor.

It carries out the reaction NAD(+) + (deoxyribonucleotide)n-3'-hydroxyl + 5'-phospho-(deoxyribonucleotide)m = (deoxyribonucleotide)n+m + AMP + beta-nicotinamide D-nucleotide.. DNA ligase that catalyzes the formation of phosphodiester linkages between 5'-phosphoryl and 3'-hydroxyl groups in double-stranded DNA using NAD as a coenzyme and as the energy source for the reaction. It is essential for DNA replication and repair of damaged DNA. The sequence is that of DNA ligase from Streptococcus suis (strain 05ZYH33).